A 259-amino-acid chain; its full sequence is 5'-nucleotidase SurE (259 aa).

A divalent metal cation contacts are provided by aspartate 13, aspartate 14, serine 44, and asparagine 100.

This sequence belongs to the SurE nucleotidase family. The cofactor is a divalent metal cation.

It is found in the cytoplasm. It catalyses the reaction a ribonucleoside 5'-phosphate + H2O = a ribonucleoside + phosphate. In terms of biological role, nucleotidase that shows phosphatase activity on nucleoside 5'-monophosphates. This is 5'-nucleotidase SurE from Bacteroides thetaiotaomicron (strain ATCC 29148 / DSM 2079 / JCM 5827 / CCUG 10774 / NCTC 10582 / VPI-5482 / E50).